A 501-amino-acid polypeptide reads, in one-letter code: ADP,ATP carrier protein 3 (501 aa).

The next 12 membrane-spanning stretches (helical) occupy residues 23-43 (LKLF…FGAL), 59-79 (IISF…TILY), 90-110 (YIFY…AYII), 146-166 (YALM…LMFW), 183-203 (PVLG…LVFF), 227-247 (IMLQ…MFLF), 293-313 (IALL…PWKA), 326-346 (VNFM…FMII), 361-381 (LLTP…IIFI), 383-403 (EIGT…VGAI), 446-466 (FGKS…PTAT), and 470-490 (IIIY…WNII).

The protein belongs to the ADP/ATP translocase tlc family.

The protein localises to the cell membrane. Provides the rickettsial cell with host ATP in exchange for rickettsial ADP. This is an obligate exchange system. This energy acquiring activity is an important component of rickettsial parasitism. The sequence is that of ADP,ATP carrier protein 3 (tlcC) from Rickettsia prowazekii (strain Madrid E).